The primary structure comprises 278 residues: Diaminopimelate epimerase (278 aa).

Asparagine 13, glutamine 46, and asparagine 67 together coordinate substrate. Residue cysteine 76 is the Proton donor of the active site. Residues 77-78 (GN), asparagine 160, asparagine 193, and 211-212 (ER) contribute to the substrate site. Residue cysteine 220 is the Proton acceptor of the active site. Residue 221-222 (GT) coordinates substrate.

The protein belongs to the diaminopimelate epimerase family. As to quaternary structure, homodimer.

The protein localises to the cytoplasm. It carries out the reaction (2S,6S)-2,6-diaminopimelate = meso-2,6-diaminopimelate. It functions in the pathway amino-acid biosynthesis; L-lysine biosynthesis via DAP pathway; DL-2,6-diaminopimelate from LL-2,6-diaminopimelate: step 1/1. Catalyzes the stereoinversion of LL-2,6-diaminopimelate (L,L-DAP) to meso-diaminopimelate (meso-DAP), a precursor of L-lysine and an essential component of the bacterial peptidoglycan. The chain is Diaminopimelate epimerase from Thioalkalivibrio sulfidiphilus (strain HL-EbGR7).